The primary structure comprises 1003 residues: cGMP-dependent protein kinase (1003 aa).

The disordered stretch occupies residues 1–141; that stretch reads MGACSSKAQH…KAIKQQEDTQ (141 aa). Gly-2 carries the N-myristoyl glycine lipid modification. Cys-4 carries the S-palmitoyl cysteine lipid modification. Residues 69 to 85 show a composition bias toward low complexity; the sequence is EQQQQQQQQQQQQQEQQ. Basic and acidic residues-rich tracts occupy residues 86–109 and 127–141; these read QHPEHQQSEKQQQHGEEQQQERKP and ERKVQKAIKQQEDTQ. CNMP-binding domain regions lie at residues 173 to 289, 292 to 391, 411 to 548, and 570 to 669; these read VCSS…FLAS, FFEM…RVLG, VFAS…ATLG, and IFRY…LQIV. The 3',5'-cyclic GMP site is built by Gly-237, Glu-238, Arg-247, and Thr-248. 3',5'-cyclic GMP contacts are provided by Arg-625, Gly-634, Glu-635, Ala-637, Arg-644, and Ser-645. The Protein kinase domain maps to 693–950; it reads LNVVRVVGRG…YKDIKEHAFF (258 aa). Residues 699–707 and Lys-722 contribute to the ATP site; that span reads VGRGTFGTV. The Proton acceptor role is filled by Asp-816. Residues 951 to 1003 enclose the AGC-kinase C-terminal domain; it reads SDFDWDRLAGRDLSPPLLPKGEIYAEDAEEGGLDIEEDEGIELEDEYEWDKDF.

Belongs to the protein kinase superfamily. AGC Ser/Thr protein kinase family. cGMP subfamily. In terms of assembly, monomer. Mg(2+) serves as cofactor.

Its subcellular location is the cell membrane. It localises to the cytoplasm. It catalyses the reaction L-seryl-[protein] + ATP = O-phospho-L-seryl-[protein] + ADP + H(+). The catalysed reaction is L-threonyl-[protein] + ATP = O-phospho-L-threonyl-[protein] + ADP + H(+). With respect to regulation, activated by cGMP. The cGMP-binding domains acts cooperatively to activate PKG. Inhibited by the antiparasitic small molecule 4-[2-(4-fluorophenyl)-5-(1-methylpiperidine-4-yl)-1Hpyrrol- 3-yl]pyridine (compound 1). Serine/threonine protein kinase which acts as a downstream effector of the second messenger cGMP. The chain is cGMP-dependent protein kinase from Eimeria tenella (Coccidian parasite).